A 1829-amino-acid polypeptide reads, in one-letter code: Afadin (1829 aa).

One can recognise a Ras-associating 1 domain in the interval F39 to D133. The interval K129 to S196 is disordered. Positions E146–R186 form a coiled coil. Positions T160 to R172 are enriched in basic residues. Over residues E173–Q189 the composition is skewed to basic and acidic residues. Residues S216, S246, and S256 each carry the phosphoserine modification. The Ras-associating 2 domain occupies S246–P348. Basic and acidic residues predominate over residues K356–D371. Positions K356 to S377 are disordered. S391 and S424 each carry phosphoserine. One can recognise an FHA domain in the interval F441 to V507. Residues S512, S557, S562, S589, and S655 each carry the phosphoserine modification. Residues D539–A595 are disordered. A compositionally biased stretch (basic and acidic residues) spans I576–T591. The Dilute domain maps to N668–N915. The 87-residue stretch at V1014 to G1100 folds into the PDZ domain. A phosphoserine mark is found at S1090, S1114, S1133, S1147, S1150, S1179, S1180, S1189, and S1206. The tract at residues S1114 to T1230 is disordered. A compositionally biased stretch (basic and acidic residues) spans I1120–G1135. A compositionally biased stretch (polar residues) spans Y1139–S1150. A compositionally biased stretch (basic and acidic residues) spans S1159 to S1179. Residues P1195 to Q1217 show a composition bias toward polar residues. T1218 and T1239 each carry phosphothreonine. Phosphoserine is present on residues S1245 and S1282. A compositionally biased stretch (basic and acidic residues) spans E1300–S1309. Disordered regions lie at residues E1300 to Q1533 and R1574 to V1724. The segment covering S1316–S1325 has biased composition (low complexity). Positions S1332–K1344 are enriched in polar residues. S1335 bears the Phosphoserine mark. At T1337 the chain carries Phosphothreonine. The span at L1371–A1380 shows a compositional bias: pro residues. Positions N1401 to A1412 are enriched in low complexity. A compositionally biased stretch (basic and acidic residues) spans A1413–L1447. Residues K1417–S1454 adopt a coiled-coil conformation. Positions M1450–A1464 are enriched in polar residues. A compositionally biased stretch (basic and acidic residues) spans T1494–L1510. A phosphoserine mark is found at S1506 and S1517. Over residues P1520–Q1533 the composition is skewed to basic and acidic residues. A coiled-coil region spans residues E1530–K1564. The segment covering E1583–D1594 has biased composition (acidic residues). Residues Q1600 to Q1672 are a coiled coil. The segment covering L1602–E1682 has biased composition (basic and acidic residues). S1701 carries the post-translational modification Phosphoserine. Over residues R1715 to V1724 the composition is skewed to polar residues. S1726 bears the Phosphoserine mark. Residues D1742 to K1829 form a disordered region. The span at N1753–G1764 shows a compositional bias: polar residues. Over residues A1768 to D1781 the composition is skewed to basic and acidic residues. Phosphoserine is present on residues S1779 and S1804. Residues V1809–K1829 are compositionally biased toward basic and acidic residues. Position 1812 is an N6-acetyllysine (K1812).

As to quaternary structure, homodimer. Interacts with F-actin, nectin and NECTIN3. Essential for the association of nectin and E-cadherin. Isoform 2/s-afadin does not interact with F-actin. Interacts with ZO-1 and occludin, but probably in an indirect manner. Interacts with RIT1, RIT2, NRXN1 and BCR. Interacts with ADAM10; the interaction locks ADAM10 at adherens junctions following ADAM10 recruitment to adherens junctions by TSPAN33. Isoform 1 is widely expressed, including in heart, brain, spleen, lung, liver, skeletal muscle, kidney and testis. Isoform 2 is mainly expressed in the brain.

The protein localises to the cell junction. The protein resides in the adherens junction. Its function is as follows. Belongs to an adhesion system, probably together with the E-cadherin-catenin system, which plays a role in the organization of homotypic, interneuronal and heterotypic cell-cell adherens junctions (AJs). Nectin- and actin-filament-binding protein that connects nectin to the actin cytoskeleton. May play a key role in the organization of epithelial structures of the embryonic ectoderm. Essential for the organization of adherens junctions. The polypeptide is Afadin (Rattus norvegicus (Rat)).